We begin with the raw amino-acid sequence, 398 residues long: Acetate kinase (398 aa).

Residue Asn-9 coordinates Mg(2+). Lys-16 lines the ATP pocket. Arg-89 contacts substrate. Asp-146 acts as the Proton donor/acceptor in catalysis. Residues 206–210 (HLGNG), 281–283 (DCR), and 329–333 (GIGEN) contribute to the ATP site. Glu-384 is a Mg(2+) binding site.

Belongs to the acetokinase family. In terms of assembly, homodimer. Mg(2+) is required as a cofactor. Requires Mn(2+) as cofactor.

Its subcellular location is the cytoplasm. It carries out the reaction acetate + ATP = acetyl phosphate + ADP. It functions in the pathway metabolic intermediate biosynthesis; acetyl-CoA biosynthesis; acetyl-CoA from acetate: step 1/2. Its function is as follows. Catalyzes the formation of acetyl phosphate from acetate and ATP. Can also catalyze the reverse reaction. The chain is Acetate kinase from Vibrio campbellii (strain ATCC BAA-1116).